The chain runs to 108 residues: uncharacterized protein (108 aa).

2 helical membrane-spanning segments follow: residues 5–27 and 83–105; these read TVYGLAYLFYSGINCILLYQLEI and IFLMTSIIDIASFKAQVLFLNIF.

It localises to the membrane. This is an uncharacterized protein from Schizosaccharomyces pombe (strain 972 / ATCC 24843) (Fission yeast).